The primary structure comprises 297 residues: Glycerol-3-phosphate dehydrogenase [NAD(P)+] (297 aa).

The NADPH site is built by tryptophan 11, arginine 33, and lysine 79. Sn-glycerol 3-phosphate is bound by residues lysine 79, glycine 107, and serine 109. NADPH is bound at residue alanine 111. Residues lysine 161, aspartate 214, serine 224, arginine 225, and asparagine 226 each coordinate sn-glycerol 3-phosphate. Lysine 161 (proton acceptor) is an active-site residue. Arginine 225 serves as a coordination point for NADPH. NADPH is bound by residues valine 249 and glutamate 251.

It belongs to the NAD-dependent glycerol-3-phosphate dehydrogenase family.

It localises to the cytoplasm. It carries out the reaction sn-glycerol 3-phosphate + NAD(+) = dihydroxyacetone phosphate + NADH + H(+). It catalyses the reaction sn-glycerol 3-phosphate + NADP(+) = dihydroxyacetone phosphate + NADPH + H(+). It functions in the pathway membrane lipid metabolism; glycerophospholipid metabolism. Its function is as follows. Catalyzes the reduction of the glycolytic intermediate dihydroxyacetone phosphate (DHAP) to sn-glycerol 3-phosphate (G3P), the key precursor for phospholipid synthesis. The protein is Glycerol-3-phosphate dehydrogenase [NAD(P)+] of Campylobacter jejuni subsp. jejuni serotype O:6 (strain 81116 / NCTC 11828).